The following is a 275-amino-acid chain: MSSHYDVQALPAEQREHILRGFGLGWWRQLGQVAIVFGVVLLACWYVGLLDATTLLNGLPSIATLAGEAMPPDFSGYRSWIRPLIDTLAMSIAGTAIAVVFSLVVAFVAARNTAPHPLVFGVARVLLNALRSVPELIMGIIFVAAVGFGALPGVLALGLHSVGMVGKFFAEAIEHVDEAPVEAARAAGATPMQVLLHAVLPQVTPQFADVAIYRWEYNFRASTVMGMVGAGGIGFELMGSLRIMQYQEVAAILLVILAMVTLVDAFSGVLRKHFK.

5 helical membrane-spanning segments follow: residues 30–50, 88–108, 136–156, 221–241, and 249–269; these read LGQVAIVFGVVLLACWYVGLL, LAMSIAGTAIAVVFSLVVAFV, LIMGIIFVAAVGFGALPGVLA, ASTVMGMVGAGGIGFELMGSL, and VAAILLVILAMVTLVDAFSGV. The 184-residue stretch at 84–267 folds into the ABC transmembrane type-1 domain; the sequence is LIDTLAMSIA…AMVTLVDAFS (184 aa).

The protein belongs to the binding-protein-dependent transport system permease family.

It localises to the cell inner membrane. Probably forms part of a binding-protein-dependent phosphite transporter. Probably responsible for the translocation of the substrate across the membrane. The polypeptide is Phosphite transport system permease protein PtxC (ptxC) (Stutzerimonas stutzeri (Pseudomonas stutzeri)).